A 126-amino-acid chain; its full sequence is Holo-[acyl-carrier-protein] synthase (126 aa).

Residues aspartate 9 and glutamate 59 each contribute to the Mg(2+) site.

The protein belongs to the P-Pant transferase superfamily. AcpS family. Mg(2+) serves as cofactor.

The protein localises to the cytoplasm. The enzyme catalyses apo-[ACP] + CoA = holo-[ACP] + adenosine 3',5'-bisphosphate + H(+). Its function is as follows. Transfers the 4'-phosphopantetheine moiety from coenzyme A to a Ser of acyl-carrier-protein. This is Holo-[acyl-carrier-protein] synthase from Myxococcus xanthus (strain DK1622).